A 346-amino-acid polypeptide reads, in one-letter code: N-acetyl-gamma-glutamyl-phosphate reductase (346 aa).

Cysteine 149 is an active-site residue.

It belongs to the NAGSA dehydrogenase family. Type 1 subfamily.

Its subcellular location is the cytoplasm. It carries out the reaction N-acetyl-L-glutamate 5-semialdehyde + phosphate + NADP(+) = N-acetyl-L-glutamyl 5-phosphate + NADPH + H(+). It participates in amino-acid biosynthesis; L-arginine biosynthesis; N(2)-acetyl-L-ornithine from L-glutamate: step 3/4. Functionally, catalyzes the NADPH-dependent reduction of N-acetyl-5-glutamyl phosphate to yield N-acetyl-L-glutamate 5-semialdehyde. This is N-acetyl-gamma-glutamyl-phosphate reductase from Geobacter sp. (strain M21).